A 399-amino-acid polypeptide reads, in one-letter code: Polypyrimidine tract-binding protein homolog 1 (399 aa).

Position 2 is an N-acetylserine (Ser2). 3 consecutive RRM domains span residues 17–95 (KVVH…YSNR), 109–196 (GNVL…YSAH), and 242–322 (SNVL…YSRH). Positions 352–399 (AVSGSAPPAGWQNPQAQSQYSGYGGSPYMYPSSDPNGASPSGQPPYYG) are disordered. The segment covering 365–384 (PQAQSQYSGYGGSPYMYPSS) has biased composition (low complexity).

It is found in the nucleus. Functionally, plays a role in pre-mRNA splicing. Binds to the polypyrimidine tract of introns. May promote the binding of U2 snRNP to pre-mRNA. The sequence is that of Polypyrimidine tract-binding protein homolog 1 (PTB) from Arabidopsis thaliana (Mouse-ear cress).